The primary structure comprises 253 residues: Transcription factor bHLH106 (253 aa).

One can recognise a bHLH domain in the interval 66–115 (AALRNHKEAERRRRERINSHLNKLRNVLSCNSKTDKATLLAKVVQRVREL).

As to quaternary structure, homodimer.

It is found in the nucleus. The polypeptide is Transcription factor bHLH106 (BHLH106) (Arabidopsis thaliana (Mouse-ear cress)).